The chain runs to 352 residues: Protein NDRG4 (352 aa).

A phosphoserine mark is found at lysine 293, serine 298, serine 317, and serine 323. The disordered stretch occupies residues 301 to 352 (AVPSASMTRLARSRTASLTSASSVDGSRPQPCAHSDSSEGMGQVNHTMEVSC). Low complexity predominate over residues 308 to 323 (TRLARSRTASLTSASS). The segment covering 338-352 (SEGMGQVNHTMEVSC) has biased composition (polar residues).

The protein belongs to the NDRG family. As to expression, predominantly expressed in the brain (at protein level). Detected in neurons of various parts of brain, including the olfactory bulb, olfactory tuberculum, cerebral cortex, striatum, hippocampus, dentate gyrus, thalamus, hypothalamus, mesencephalon, cerebellum, pons and medulla oblongata.

The protein localises to the cytoplasm. It localises to the cytosol. In terms of biological role, contributes to the maintenance of intracerebral BDNF levels within the normal range, which is necessary for the preservation of spatial learning and the resistance to neuronal cell death caused by ischemic stress. May enhance growth factor-induced ERK1 and ERK2 phosphorylation. May attenuate NGF-promoted ELK1 phosphorylation in a microtubule-dependent manner. This Mus musculus (Mouse) protein is Protein NDRG4 (Ndrg4).